The sequence spans 243 residues: UPF0758 protein MAE_44350 (243 aa).

The MPN domain maps to 113-235 (VIDSPDTAAA…FQSLRQITDL (123 aa)). 3 residues coordinate Zn(2+): histidine 184, histidine 186, and aspartate 197. A JAMM motif motif is present at residues 184–197 (HNHPTGSLVPSQDD).

It belongs to the UPF0758 family.

This Microcystis aeruginosa (strain NIES-843 / IAM M-2473) protein is UPF0758 protein MAE_44350.